A 71-amino-acid chain; its full sequence is Large ribosomal subunit protein bL31 (71 aa).

Zn(2+)-binding residues include C16, C18, C36, and C39.

Belongs to the bacterial ribosomal protein bL31 family. Type A subfamily. In terms of assembly, part of the 50S ribosomal subunit. The cofactor is Zn(2+).

Functionally, binds the 23S rRNA. The sequence is that of Large ribosomal subunit protein bL31 from Pseudothermotoga lettingae (strain ATCC BAA-301 / DSM 14385 / NBRC 107922 / TMO) (Thermotoga lettingae).